The primary structure comprises 578 residues: Potassium-transporting ATPase potassium-binding subunit (578 aa).

The next 11 membrane-spanning stretches (helical) occupy residues 3–23 (AAALAEIAAFFGLLTAAAVPL), 67–87 (AAAALTFNAAGLLAVFALERL), 95–115 (PAGLPAVSPLVAWNTAVSFAT), 136–156 (ALTVQNFLSAATGISVLAALV), 181–201 (LLLPLAAALALLLAWQGVPQT), 264–284 (LEALSILLVPAALCFAFGALV), 291–311 (WTVYSAMLAILVPLTVATVSA), 396–416 (GLYGMLLFAILAVFLAGLMVG), 436–456 (LAILAPSATVLLGTAAACLLP), 504–524 (VAMLVGRYWVMLPVLAIAGAF), and 543–563 (LFAGLLVATVLLVGALTFLPA).

This sequence belongs to the KdpA family. The system is composed of three essential subunits: KdpA, KdpB and KdpC.

The protein localises to the cell inner membrane. Its function is as follows. Part of the high-affinity ATP-driven potassium transport (or Kdp) system, which catalyzes the hydrolysis of ATP coupled with the electrogenic transport of potassium into the cytoplasm. This subunit binds the periplasmic potassium ions and delivers the ions to the membrane domain of KdpB through an intramembrane tunnel. In Anaeromyxobacter dehalogenans (strain 2CP-C), this protein is Potassium-transporting ATPase potassium-binding subunit.